Consider the following 107-residue polypeptide: Prepilin peptidase-dependent protein C (107 aa).

Residues 1–10 (MSASLKNQQG) constitute a propeptide that is removed on maturation. At Phe-11 the chain carries N-methylphenylalanine. The chain crosses the membrane as a helical span at residues 11–30 (FSLPEVMLAMVLMVMIVTAL).

It localises to the membrane. Not yet known. This is Prepilin peptidase-dependent protein C (ppdC) from Escherichia coli (strain K12).